The following is a 140-amino-acid chain: Midkine (140 aa).

Positions 1–22 (MQHRGFFLLALLALLVVTSAVA) are cleaved as a signal peptide. Disulfide bonds link Cys34/Cys58, Cys42/Cys67, Cys49/Cys71, Cys81/Cys113, and Cys91/Cys123.

This sequence belongs to the pleiotrophin family. As to quaternary structure, homodimer. Interacts with ALK. Interacts with LRP1; promotes neuronal survival. Interacts with LRP2. Interacts with NCAM1. Interacts (via C-terminal) with PTPRZ1 (via chondroitin sulfate chains); this interaction is inhibited by PTN; this interaction promotes neuronal migration. Interacts with NCL; this interaction promotes NCL clustering and lateral movements of this complex into lipid rafts leading to MDK internalization. Interacts with LRP6 and LRP8: this interaction is calcium dependent. Interacts with ITGA4. Interacts with ITGA6. Interacts with ITGB1. Interacts with ITGA4:ITGB1 complex; this interaction mediates MDK-induced osteoblast cells migration through PXN phosphorylation. Interacts with ITGA6:ITGB1 complex; this interaction mediates MDK-induced neurite outgrowth. Interacts with NOTCH2; this interactio mediates a nuclear accumulation of NOTCH2 and therefore activation of NOTCH2 signaling leading to interaction between HES1 and STAT3. Interacts with GPC2 (via heparan sulfate chain); this interaction is inhibited by heparin followed by chondroitin sulfate E; this interaction induces GPC2 clustering through heparan sulfate chain; this interaction induces neuronal cell adhesion and neurite outgrowth. Interacts with SDC3; this interaction induces SDC3 clustering; this interaction induces neuronal cell adhesion and neurite outgrowth. Interacts with SDC1. Interacts with CSPG5; this interaction promotes elongation of oligodendroglial precursor-like cells. In terms of tissue distribution, expressed in the follicular epithelium and granulosa cells of the ovary.

It is found in the secreted. Secreted protein that functions as a cytokine and growth factor and mediates its signal through cell-surface proteoglycan and non-proteoglycan receptors. Binds cell-surface proteoglycan receptors via their chondroitin sulfate (CS) groups. Thereby regulates many processes like inflammatory response, cell proliferation, cell adhesion, cell growth, cell survival, tissue regeneration, cell differentiation and cell migration. Participates in inflammatory processes by exerting two different activities. Firstly, mediates neutrophils and macrophages recruitment to the sites of inflammation both by direct action by cooperating namely with ITGB2 via LRP1 and by inducing chemokine expression. This inflammation can be accompanied by epithelial cell survival and smooth muscle cell migration after renal and vessel damage, respectively. Secondly, suppresses the development of tolerogenic dendric cells thereby inhibiting the differentiation of regulatory T cells and also promote T cell expansion through NFAT signaling and Th1 cell differentiation. Promotes tissue regeneration after injury or trauma. After heart damage negatively regulates the recruitment of inflammatory cells and mediates cell survival through activation of anti-apoptotic signaling pathways via MAPKs and AKT pathways through the activation of angiogenesis. Also facilitates liver regeneration as well as bone repair by recruiting macrophage at trauma site and by promoting cartilage development by facilitating chondrocyte differentiation. Plays a role in brain by promoting neural precursor cells survival and growth through interaction with heparan sulfate proteoglycans. Binds PTPRZ1 and promotes neuronal migration and embryonic neurons survival. Binds SDC3 or GPC2 and mediates neurite outgrowth and cell adhesion. Binds chondroitin sulfate E and heparin leading to inhibition of neuronal cell adhesion induced by binding with GPC2. Binds CSPG5 and promotes elongation of oligodendroglial precursor-like cells. Also binds ITGA6:ITGB1 complex; this interaction mediates MDK-induced neurite outgrowth. Binds LRP1; promotes neuronal survival. Binds ITGA4:ITGB1 complex; this interaction mediates MDK-induced osteoblast cells migration through PXN phosphorylation. Binds anaplastic lymphoma kinase (ALK) which induces ALK activation and subsequent phosphorylation of the insulin receptor substrate (IRS1), followed by the activation of mitogen-activated protein kinase (MAPK) and PI3-kinase, and the induction of cell proliferation. Promotes epithelial to mesenchymal transition through interaction with NOTCH2. During arteriogenesis, plays a role in vascular endothelial cell proliferation by inducing VEGFA expression and release which in turn induces nitric oxide synthase expression. Moreover activates vasodilation through nitric oxide synthase activation. Negatively regulates bone formation in response to mechanical load by inhibiting Wnt/beta-catenin signaling in osteoblasts. In addition plays a role in hippocampal development, working memory, auditory response, early fetal adrenal gland development and the female reproductive system. The polypeptide is Midkine (Mus musculus (Mouse)).